The chain runs to 622 residues: Low affinity potassium transport system protein Kup (622 aa).

12 helical membrane-spanning segments follow: residues 9-29, 49-69, 103-123, 137-157, 165-185, 213-233, 247-267, 276-296, 337-357, 363-383, 396-416, and 419-439; these read LPAI…TSPL, VFGF…IKYL, VIMG…TPAI, PQLD…LFMI, VGKL…GLGL, VSFI…ALYA, WFTV…ALLL, PFFL…AALA, IYIP…IVSF, LAAA…ILST, FVAL…TANL, and LLSG…VMTT.

This sequence belongs to the HAK/KUP transporter (TC 2.A.72) family.

The protein resides in the cell inner membrane. The enzyme catalyses K(+)(in) + H(+)(in) = K(+)(out) + H(+)(out). In terms of biological role, responsible for the low-affinity transport of potassium into the cell. Likely operates as a K(+):H(+) symporter. This chain is Low affinity potassium transport system protein Kup, found in Escherichia coli (strain K12 / MC4100 / BW2952).